Consider the following 474-residue polypeptide: Vacuolar basic amino acid transporter 2 (474 aa).

Topologically, residues 1-33 (MSISNWITTAYLITSTSFQPLYGSFSDALGRRN) are cytoplasmic. Residues 34–54 (CLFFANGAFTIGCLACGFSKN) traverse the membrane as a helical segment. Topologically, residues 55–62 (IYMLSFMR) are vacuolar. A helical transmembrane segment spans residues 63–85 (ALTGIGGGGLITLSTIVNSDVIP). At 86–97 (SSKRGIFQAFQN) the chain is on the cytoplasmic side. Residues 98 to 118 (LLLGFGAICGASFGGTIASSI) form a helical membrane-spanning segment. Over 119-121 (GWR) the chain is Vacuolar. Residues 122-142 (WCFLIQVPISVISSILMNYYV) form a helical membrane-spanning segment. Residues 143–167 (PNQKEYNRQNSSIFQNPGKILRDID) lie on the Cytoplasmic side of the membrane. Residues 168-188 (VMGSILIITGLTLQLLYLSLG) traverse the membrane as a helical segment. Residues 189 to 196 (CSTSKLSW) lie on the Vacuolar side of the membrane. Residues 197-217 (TSPSVLLLLVGSVIILLLFIL) form a helical membrane-spanning segment. Over 218–238 (HERKTSARAIIPMELVNSSYS) the chain is Cytoplasmic. A helical membrane pass occupies residues 239 to 259 (VVVLSISILVGFASYAYLFTL). The Vacuolar segment spans residues 260–273 (PLFFQIVLGDSTAK). Residues 274–294 (AGLRLTIPSLFTPVGSLITGF) traverse the membrane as a helical segment. Topologically, residues 295 to 303 (SMSKYNCLR) are cytoplasmic. A helical transmembrane segment spans residues 304-324 (LLLYIGISLMFLGNFLFLFIE). Residues 325–331 (KTSPNWL) are Vacuolar-facing. The helical transmembrane segment at 332–352 (IGLFLIPANLGQGITFPTTLF) threads the bilayer. Residues 353 to 375 (TFIFMFSKSDQATATSTLYLFRS) are Cytoplasmic-facing. The chain crosses the membrane as a helical span at residues 376-396 (IGSVWGVAISAGVIQLSFAGL). Residues 397–447 (LRSNLKGLLDENKIKKLIVQLSANSSYIGSLHGEVKNTVIKSFDEATKRAH) are Vacuolar-facing. Residue asparagine 420 is glycosylated (N-linked (GlcNAc...) asparagine). A helical membrane pass occupies residues 448–468 (LMSTLLSSLALILCILKDNLA). Residues 469–474 (KPKTRR) lie on the Cytoplasmic side of the membrane.

This sequence belongs to the major facilitator superfamily.

The protein localises to the vacuole membrane. Transporter required for vacuolar uptake of histidine, arginine and lysine and to a lesser extent tyrosine. The protein is Vacuolar basic amino acid transporter 2 (VBA2) of Saccharomyces cerevisiae (strain ATCC 204508 / S288c) (Baker's yeast).